The following is an 850-amino-acid chain: Receptor-like serine/threonine-protein kinase SD1-8 (850 aa).

The first 26 residues, 1-26 (MRGLPNFYHSYTFFFFFLLILFPAYS), serve as a signal peptide directing secretion. Topologically, residues 27-441 (ISANTLSASE…LEDKRNRSAK (415 aa)) are extracellular. In terms of domain architecture, Bulb-type lectin spans 31–153 (TLSASESLTI…KNSAPDGVLW (123 aa)). 3 N-linked (GlcNAc...) asparagine glycosylation sites follow: Asn-43, Asn-118, and Asn-242. One can recognise an EGF-like domain in the interval 292 to 328 (PKDQCDEYKECGVYGYCDSNTSPVCNCIKGFKPRNPQ). 4 disulfide bridges follow: Cys-296/Cys-308, Cys-302/Cys-316, Cys-378/Cys-403, and Cys-382/Cys-388. The 82-residue stretch at 347–428 (CGGGDGFVRL…GGQDLYVRLA (82 aa)) folds into the PAN domain. Asn-387 and Asn-437 each carry an N-linked (GlcNAc...) asparagine glycan. Residues 442 to 462 (IIGSSIGVSVLLLLSFIIFFL) form a helical membrane-spanning segment. The Cytoplasmic portion of the chain corresponds to 463–850 (WKRKQKRSIL…QITVSVLDAR (388 aa)). Positions 526–807 (FSNANKLGQG…LMLGSESTTI (282 aa)) constitute a Protein kinase domain. Residues 532 to 540 (LGQGGFGIV) and Lys-554 contribute to the ATP site. The segment at 615 to 632 (SRNSKLNWQMRFDIINGI) is caM-binding. The active-site Proton acceptor is the Asp-651.

This sequence belongs to the protein kinase superfamily. Ser/Thr protein kinase family. Interacts with PUB9, PUB13, PUB14 and PUB38. In terms of tissue distribution, expressed in the root-hypocotyl transition zone, at the base of lateral roots, axillary buds and pedicels.

It is found in the cell membrane. It catalyses the reaction L-seryl-[protein] + ATP = O-phospho-L-seryl-[protein] + ADP + H(+). It carries out the reaction L-threonyl-[protein] + ATP = O-phospho-L-threonyl-[protein] + ADP + H(+). Its function is as follows. Involved in the regulation of cellular expansion and differentiation. The protein is Receptor-like serine/threonine-protein kinase SD1-8 (SD18) of Arabidopsis thaliana (Mouse-ear cress).